Here is a 410-residue protein sequence, read N- to C-terminus: Kynureninase (410 aa).

Pyridoxal 5'-phosphate contacts are provided by residues Thr-108, Ser-109, 135–138 (FPTD), Thr-176, Asp-205, His-208, and Tyr-230. Lys-231 is modified (N6-(pyridoxal phosphate)lysine). Pyridoxal 5'-phosphate-binding residues include Trp-260 and Thr-286.

The protein belongs to the kynureninase family. In terms of assembly, homodimer. The cofactor is pyridoxal 5'-phosphate.

The enzyme catalyses L-kynurenine + H2O = anthranilate + L-alanine + H(+). It catalyses the reaction 3-hydroxy-L-kynurenine + H2O = 3-hydroxyanthranilate + L-alanine + H(+). It functions in the pathway amino-acid degradation; L-kynurenine degradation; L-alanine and anthranilate from L-kynurenine: step 1/1. Its pathway is cofactor biosynthesis; NAD(+) biosynthesis; quinolinate from L-kynurenine: step 2/3. In terms of biological role, catalyzes the cleavage of L-kynurenine (L-Kyn) and L-3-hydroxykynurenine (L-3OHKyn) into anthranilic acid (AA) and 3-hydroxyanthranilic acid (3-OHAA), respectively. The polypeptide is Kynureninase (Deinococcus radiodurans (strain ATCC 13939 / DSM 20539 / JCM 16871 / CCUG 27074 / LMG 4051 / NBRC 15346 / NCIMB 9279 / VKM B-1422 / R1)).